The following is a 499-amino-acid chain: Leukocyte immunoglobulin-like receptor subfamily A member 4 (499 aa).

The N-terminal stretch at 1–23 is a signal peptide; it reads MTLILTSLLFFGLSLGPRTRVQA. 4 consecutive Ig-like C2-type domains span residues 24–118, 123–213, 224–313, and 324–413; these read ENLL…LVVT, PTLS…SDPL, PSLL…DPLD, and PSLS…SEPL. Over 24-446 the chain is Extracellular; sequence ENLLKPILWA…PHLQDYTVEN (423 aa). Cys-49 and Cys-98 form a disulfide bridge. Asn-138 is a glycosylation site (N-linked (GlcNAc...) asparagine). The cysteines at positions 143 and 195 are disulfide-linked. Residues Asn-239, Asn-279, and Asn-300 are each glycosylated (N-linked (GlcNAc...) asparagine). The cysteines at positions 244 and 295 are disulfide-linked. A disulfide bridge links Cys-344 with Cys-395. The residue at position 404 (Tyr-404) is a 3'-nitrotyrosine. A helical membrane pass occupies residues 447–467; that stretch reads LIRMGVAGLVLLFLGILLFEA. The Cytoplasmic segment spans residues 468-499; it reads QHSQRSPPRCSQEANSRKDNAPFRVVEPWEQI.

In terms of assembly, interacts with FCER1G; this stabilizes the expression of both proteins at the cell membrane. Interacts with BST2; leads to activation of LILRA4-mediated signaling and down-regulation of the innate immune response to viral pathogens. Detected on plasmacytoid dendritic cells (at protein level). Detected on plasmacytoid dendritic cells, but not on monocytes or B cells.

The protein localises to the cell membrane. Functionally, functions coreceptor to limit the innate immune responses to viral infections; signaling occurs via FCER1G. Down-regulates the production of IFNA1, IFNA2, IFNA4, IFNB1 and TNF by plasmacytoid dendritic cells that have been exposed to influenza virus or cytidine-phosphate-guanosine (CpG) dinucleotides, indicating it functions as a negative regulator of TLR7 and TLR9 signaling cascades. Down-regulates interferon production in response to interaction with BST2 on HIV-1 infected cells. Activates a signaling cascade in complex with FCER1G that results in phosphorylation of Src family and Syk kinases and thereby triggers mobilization of intracellular Ca(2+). Does not interfere with the differentiation of plasmacytoid dendritic cells into antigen-presenting cells. This chain is Leukocyte immunoglobulin-like receptor subfamily A member 4, found in Homo sapiens (Human).